Reading from the N-terminus, the 40-residue chain is Photosystem II reaction center protein J (40 aa).

Residues 8-28 (IPLWLIGTVTGIPVIGLVGIF) form a helical membrane-spanning segment.

It belongs to the PsbJ family. PSII is composed of 1 copy each of membrane proteins PsbA, PsbB, PsbC, PsbD, PsbE, PsbF, PsbH, PsbI, PsbJ, PsbK, PsbL, PsbM, PsbT, PsbX, PsbY, PsbZ, Psb30/Ycf12, at least 3 peripheral proteins of the oxygen-evolving complex and a large number of cofactors. It forms dimeric complexes.

It localises to the plastid. The protein localises to the chloroplast thylakoid membrane. Its function is as follows. One of the components of the core complex of photosystem II (PSII). PSII is a light-driven water:plastoquinone oxidoreductase that uses light energy to abstract electrons from H(2)O, generating O(2) and a proton gradient subsequently used for ATP formation. It consists of a core antenna complex that captures photons, and an electron transfer chain that converts photonic excitation into a charge separation. The chain is Photosystem II reaction center protein J from Cucumis sativus (Cucumber).